A 263-amino-acid chain; its full sequence is Neurovirulence factor ICP34.5 (263 aa).

Residues 1–14 (MARRRRHRGPRRPR) show a composition bias toward basic residues. Residues 1–16 (MARRRRHRGPRRPRPP) are required for nucleolar localization. 2 disordered regions span residues 1 to 128 (MARR…PFRL) and 149 to 190 (RRAG…PATP). The segment covering 24 to 35 (TAQSQVTSTPNS) has biased composition (polar residues). Positions 45–58 (AAPPPPPASGPPPS) are enriched in pro residues. Residues 73 to 83 (ASDDDDDDDWP) show a composition bias toward acidic residues. 2 stretches are compositionally biased toward pro residues: residues 84–93 (DSPPPEPAPE) and 119–128 (SHPPSRPFRL). The Nuclear export signal motif lies at 128–137 (LPPRLALRLR). Tandem repeats lie at residues 161 to 163 (ATP), 164 to 166 (ATP), 167 to 169 (ATP), 170 to 172 (ATP), 173 to 175 (ATP), 176 to 178 (ATP), 179 to 181 (ATP), 182 to 184 (ATP), 185 to 187 (ATP), and 188 to 190 (ATP). The tract at residues 161 to 190 (ATPATPATPATPATPATPATPATPATPATP) is 10 X 3 AA tandem repeats of A-T-P. Residues 164–190 (ATPATPATPATPATPATPATPATPATP) show a composition bias toward low complexity. Residues 190–203 (PARVRFSPHVRVRH) form an interaction with host PPP1CA region. The segment at 205–263 (VVWASAARLARRGSWARERADRARFRRRVAEAEAVIGPCLGPEARARALARGAGPANSV) is important for interferon resistance. Positions 215–233 (RRGSWARERADRARFRRRV) match the Bipartite nuclear localization signal motif. The segment at 233–248 (VAEAEAVIGPCLGPEA) is interaction with host EIF2S1/EIF-2ALPHA.

Belongs to the PPP1R15 family. In terms of assembly, interacts with host PPP1CA; this interaction to forms a high-molecular-weight complex that dephosphorylates EIF2S1/eIF-2alpha. Interacts with host EIF2S1/eIF-2alpha; this interaction is crucial for the specific dephosphorylation of EIF2S1/eIF-2alpha by PPP1CA. Binds to proliferating cell nuclear antigen (PCNA), which may release host cells from growth arrest and facilitate viral replication. Interacts (via N-terminus) with host C1QBP; this interaction allows C1QBP to be recruited to the inner nuclear membrane by ICP34.5. Interacts with host PRKCA. Interacts with protein UL31. Interacts with host STING/TMEM173; this interaction inhibits the intracellular DNA sensing pathway. Interacts with host BECN1; this interaction modulates host autophagy.

The protein resides in the host cytoplasm. Its subcellular location is the host nucleus. It is found in the host nucleolus. It localises to the virion. Its function is as follows. Inhibits the establishment of the immune response and of the integrated stress response (ISR) in the infected cell. Plays essential roles in viral nuclear egress to mediate capsid transit across the nuclear membrane. Facilitates nuclear egress cooperatively with host C1QBP and protein kinase C/PKC to induce lamin A/C phosphorylation and subsequent reorganization. In turn, lamina disassembles and nuclear egress occurs. Recruits the serine/threonine protein phosphatase PPP1CA/PP1-alpha to dephosphorylate the translation initiation factor EIF2S1/eIF-2alpha, thereby couteracting the host shutoff of protein synthesis involving double-stranded RNA-dependent protein kinase EIF2AK2/PKR. In turn, controls host IRF3 activation and subsequently inhibits host interferon response. Controls the DNA sensing pathway by interacting with and inhibiting host STING/TMEM173. Also down-modulates the host MHC class II proteins cell surface expression. Acts as a neurovirulence factor that has a profound effect on the growth of the virus in central nervous system tissue, by interacting with host BECN1 and thereby antagonizing the host autophagy response. The sequence is that of Neurovirulence factor ICP34.5 (RL1) from Human herpesvirus 1 (strain F) (HHV-1).